Consider the following 52-residue polypeptide: Large ribosomal subunit protein bL32c (52 aa).

This sequence belongs to the bacterial ribosomal protein bL32 family.

Its subcellular location is the plastid. It localises to the chloroplast. The sequence is that of Large ribosomal subunit protein bL32c from Arabis hirsuta (Hairy rock-cress).